The chain runs to 192 residues: Casparian strip membrane protein 2 (192 aa).

Residues 1–31 are Cytoplasmic-facing; the sequence is MTKDVVVEHGESSKAPLVAAPAASGVGRAAS. Residues 32-52 form a helical membrane-spanning segment; that stretch reads VADVFLRFLAIVGTIASAISM. Residues 53–79 are Extracellular-facing; sequence GTTNETLPFFTQFIQFEAKYSDLPSFT. A glycan (N-linked (GlcNAc...) asparagine) is linked at asparagine 56. The helical transmembrane segment at 80 to 100 threads the bilayer; it reads FFVAANAVVCTYLVLSIPLSI. Residues 101-112 lie on the Cytoplasmic side of the membrane; the sequence is VHIVRPRARYSR. A helical transmembrane segment spans residues 113–133; sequence LVLVFFDAAMLTLLTAGASAA. Residues 134–166 are Extracellular-facing; it reads AAIVYLAHKGNVRANWFAICQQFDSFCERISGS. The chain crosses the membrane as a helical span at residues 167–187; that stretch reads LIGSFAAMVLLIMLIFLSAFA. Over 188-192 the chain is Cytoplasmic; sequence LARRH.

The protein belongs to the Casparian strip membrane proteins (CASP) family. Homodimer and heterodimers.

It localises to the cell membrane. Functionally, regulates membrane-cell wall junctions and localized cell wall deposition. Required for establishment of the Casparian strip membrane domain (CSD) and the subsequent formation of Casparian strips, a cell wall modification of the root endodermis that determines an apoplastic barrier between the intraorganismal apoplasm and the extraorganismal apoplasm and prevents lateral diffusion. The chain is Casparian strip membrane protein 2 from Panicum virgatum (Blackwell switchgrass).